Reading from the N-terminus, the 774-residue chain is E3 ubiquitin-protein ligase RFWD3 (774 aa).

Disordered regions lie at residues 32 to 126 and 203 to 281; these read GTIE…TAGA and PYPL…SAME. Phosphoserine; by ATM and ATR occurs at positions 59 and 75. Residues 92–103 show a composition bias toward acidic residues; it reads LTEEVQPSEENM. A compositionally biased stretch (polar residues) spans 108–121; it reads PGTSEEPSQGSGAN. Positions 223 to 242 are enriched in acidic residues; that stretch reads SDSDGSAEDEEVVVQAEEPE. The RING-type; degenerate zinc-finger motif lies at 288–332; that stretch reads CTICLEQWTNAGDHRISALRCGHLFGFRCISKWLKGQTRKCPQCN. A coiled-coil region spans residues 358 to 403; sequence RMKSDLLNEQMLRKQAELESAQCRLQLQVLIDKCTKLNSRVQDLEK. 3 WD repeats span residues 493 to 535, 536 to 568, and 583 to 628; these read IPMH…VVQT, YNTGRPVWSCCWCLDENNYVYAGLASGSILIYD, and KARC…SHKP.

Interacts with MDM2 and p53/TP53. Binds to the RPA complex via direct interaction with RPA2. Interacts with RAD51. Post-translationally, phosphorylated at Ser-59 and Ser-75 upon DNA damage by ATM or ATR. ATM phosphorylation occurs at early times upon DNA damage, while ATR is the major kinase at later times. Phosphorylation by ATM and ATR is required to stabilize p53/TP53. Part of the phosphorylation depends upon RPA2 presence.

Its subcellular location is the nucleus. It localises to the PML body. It is found in the cytoplasm. The enzyme catalyses S-ubiquitinyl-[E2 ubiquitin-conjugating enzyme]-L-cysteine + [acceptor protein]-L-lysine = [E2 ubiquitin-conjugating enzyme]-L-cysteine + N(6)-ubiquitinyl-[acceptor protein]-L-lysine.. It participates in protein modification; protein ubiquitination. In terms of biological role, E3 ubiquitin-protein ligase required for the repair of DNA interstrand cross-links (ICL) in response to DNA damage. Plays a key role in RPA-mediated DNA damage signaling and repair. Acts by mediating ubiquitination of the RPA complex (RPA1, RPA2 and RPA3 subunits) and RAD51 at stalled replication forks, leading to remove them from DNA damage sites and promote homologous recombination. Also mediates the ubiquitination of p53/TP53 in the late response to DNA damage, and acts as a positive regulator of p53/TP53 stability, thereby regulating the G1/S DNA damage checkpoint. May act by catalyzing the formation of short polyubiquitin chains on p53/TP53 that are not targeted to the proteasome. In response to ionizing radiation, interacts with MDM2 and enhances p53/TP53 ubiquitination, possibly by restricting MDM2 from extending polyubiquitin chains on ubiquitinated p53/TP53. Required to translesion DNA synthesis across DNA-protein cross-link adducts by catalyzing ubiquitination of proteins on single-stranded DNA (ssDNA). This is E3 ubiquitin-protein ligase RFWD3 (Rfwd3) from Mus musculus (Mouse).